Here is a 201-residue protein sequence, read N- to C-terminus: Probable nicotinate-nucleotide adenylyltransferase (201 aa).

Belongs to the NadD family.

The enzyme catalyses nicotinate beta-D-ribonucleotide + ATP + H(+) = deamido-NAD(+) + diphosphate. It participates in cofactor biosynthesis; NAD(+) biosynthesis; deamido-NAD(+) from nicotinate D-ribonucleotide: step 1/1. Catalyzes the reversible adenylation of nicotinate mononucleotide (NaMN) to nicotinic acid adenine dinucleotide (NaAD). The polypeptide is Probable nicotinate-nucleotide adenylyltransferase (Clostridium botulinum (strain Langeland / NCTC 10281 / Type F)).